The following is a 319-amino-acid chain: Shiga-like toxin 2 subunit A (319 aa).

The signal sequence occupies residues 1–22 (MKCILFKWVLCLLLGFSSVSYS). The interval 23–272 (REFTIDFSTQ…CHHQGARSVR (250 aa)) is A1. E189 is an active-site residue. C263 and C282 are joined by a disulfide. An A2 region spans residues 273–314 (AVNEESQPECQITGDRPVIKINNTLWESNTAAAFLNRKSQFL).

The protein belongs to the ribosome-inactivating protein family. As to quaternary structure, shiga-like toxin contains a single A subunit and multiple copies of a B subunit.

It is found in the secreted. It carries out the reaction Endohydrolysis of the N-glycosidic bond at one specific adenosine on the 28S rRNA.. Its function is as follows. The A subunit is responsible for inhibiting protein synthesis through the catalytic inactivation of 60S ribosomal subunits. After endocytosis, the A subunit is cleaved by furin in two fragments, A1 and A2: A1 is the catalytically active fragment, and A2 is essential for holotoxin assembly with the B subunits. The sequence is that of Shiga-like toxin 2 subunit A (stxA2) from Escherichia coli O157:H7 (Bacteriophage 933W).